The chain runs to 530 residues: T-complex protein 1 subunit zeta (530 aa).

Position 38 (G38) interacts with ADP. An ATP-binding site is contributed by G38. Mg(2+) is bound at residue D89. ADP contacts are provided by G90, T91, T92, S93, T157, K158, and A410. The ATP site is built by G90, T91, and T92. Residues A410, G411, D495, and K500 each contribute to the ATP site. An ADP-binding site is contributed by D495.

As to quaternary structure, component of the chaperonin-containing T-complex (TRiC), a hexadecamer composed of two identical back-to-back stacked rings enclosing a protein folding chamber. Each ring is made up of eight different subunits: TCP1/CCT1, CCT2, CCT3, CCT4, CCT5, CCT6A/CCT6, CCT7, CCT8. Interacts with PACRG.

The protein localises to the cytoplasm. The enzyme catalyses ATP + H2O = ADP + phosphate + H(+). Its function is as follows. Component of the chaperonin-containing T-complex (TRiC), a molecular chaperone complex that assists the folding of actin, tubulin and other proteins upon ATP hydrolysis. The protein is T-complex protein 1 subunit zeta of Gallus gallus (Chicken).